Here is a 171-residue protein sequence, read N- to C-terminus: Co-chaperone protein HscB homolog (171 aa).

Residues 3–75 form the J domain; it reads SHFALFDLEP…SQRARYLLSL (73 aa).

It belongs to the HscB family. As to quaternary structure, interacts with HscA and stimulates its ATPase activity.

Functionally, co-chaperone involved in the maturation of iron-sulfur cluster-containing proteins. Seems to help targeting proteins to be folded toward HscA. The sequence is that of Co-chaperone protein HscB homolog from Azotobacter vinelandii.